The sequence spans 307 residues: MAPYSVVASVLAAAPPQQSGSVRQLPSTINRAITQRSQSRHVASASSASSPTTMLEERDNLWEIGGPYWWPFSSFTPPAHLDGSLPGDRGFDPFSLGTSWGQPPVDVSDPNYDESRLRWLLEGELYNGRLAMLAVVGVLTVEAQGKGPWWEIPGNLNLFGTPYVVAVVGGHLAFALLEKKRLENFRETGEAGHFGAARFDPLDLTEANPLGTDYNRQAEVRNCRLAMLTFLGFSVQAWVTGKGPIENAKDHLASPFEANIFTYGDRGTNVVAIFSAFAAVMHIAELAREKKAEDKPRSRNRTLSGSS.

A chloroplast-targeting transit peptide spans 1 to 44; the sequence is MAPYSVVASVLAAAPPQQSGSVRQLPSTINRAITQRSQSRHVAS. The segment at 34–54 is disordered; that stretch reads TQRSQSRHVASASSASSPTTM. Chlorophyll a is bound by residues T52, E63, I64, G65, Y68, L81, P86, R89, G90, F91, and D92. Residue L96 participates in loroxanthin binding. Residues 111–143 traverse the membrane as a helical segment; it reads NYDESRLRWLLEGELYNGRLAMLAVVGVLTVEA. Residues L120, E124, N127, M132, and K146 each contribute to the chlorophyll a site. W149 is a loroxanthin binding site. Positions 151, 163, 171, 178, 181, 190, 198, and 200 each coordinate chlorophyll a. Residues 161-186 traverse the membrane as a helical segment; it reads TPYVVAVVGGHLAFALLEKKRLENFR. D200 and L202 together coordinate all-trans-violaxanthin. The chlorophyll a site is built by L204, N208, Y214, N215, A218, N222, and R224. A helical membrane pass occupies residues 213 to 238; the sequence is DYNRQAEVRNCRLAMLTFLGFSVQAW. F230 lines the loroxanthin pocket. All-trans-violaxanthin is bound at residue F233. Q236 lines the chlorophyll a pocket. P244 serves as a coordination point for all-trans-violaxanthin. Residues N247, H251, P255, F256, A258, N259, I260, and F274 each contribute to the chlorophyll a site. The helical transmembrane segment at 265–289 threads the bilayer; that stretch reads DRGTNVVAIFSAFAAVMHIAELARE.

Belongs to the light-harvesting chlorophyll a/b-binding (LHC) protein family. Homooligomer. Component of a light-harvesting complex (LHC) consisting of 11 chlorophyll a-b binding proteins. The cofactor is Binds 11 chlorophylls (Chl-a and Chl-b) and the 2 carotenoids violaxanthin and loroxanthin..

The protein localises to the plastid. It is found in the chloroplast thylakoid membrane. In terms of biological role, component of a light-harvesting complex (LHC). The LHC functions as a light receptor, it captures and delivers excitation energy to photosystems with which it is closely associated. Functions in a far-red LHC by absorbing far-red light and promoting photosystem II (PSII) excitation, likely with entropy-driven uphill excitation energy transfer. Exhibits a typical absorption band at 671 nm (Qy band), as well as a large far-red absorption band at 706.5 together with fluorescence emission at around 713 nm (F713). The polypeptide is Chlorophyll a-b binding protein 1, chloroplastic (Prasiola crispa (Green alga)).